Here is a 1343-residue protein sequence, read N- to C-terminus: uncharacterized protein (1343 aa).

A helical transmembrane segment spans residues 432 to 449 (LYVYFVTTKTGVVAFSLL).

Belongs to the IIV-6 295L family.

Its subcellular location is the membrane. This is an uncharacterized protein from Acheta domesticus (House cricket).